Reading from the N-terminus, the 271-residue chain is Phosphonates import ATP-binding protein PhnC 2 (271 aa).

One can recognise an ABC transporter domain in the interval 2–245; that stretch reads LTIDKLTKRF…VARDIYGAGA (244 aa). Position 34-41 (34-41) interacts with ATP; the sequence is GRSGAGKS.

Belongs to the ABC transporter superfamily. Phosphonates importer (TC 3.A.1.9.1) family. The complex is composed of two ATP-binding proteins (PhnC), two transmembrane proteins (PhnE) and a solute-binding protein (PhnD).

Its subcellular location is the cell inner membrane. The catalysed reaction is phosphonate(out) + ATP + H2O = phosphonate(in) + ADP + phosphate + H(+). Its function is as follows. Part of the ABC transporter complex PhnCDE involved in phosphonates import. Responsible for energy coupling to the transport system. The chain is Phosphonates import ATP-binding protein PhnC 2 from Roseobacter denitrificans (strain ATCC 33942 / OCh 114) (Erythrobacter sp. (strain OCh 114)).